A 367-amino-acid chain; its full sequence is Serine/threonine-protein kinase-transforming protein Rmil (367 aa).

The tract at residues 1–64 is disordered; the sequence is EGGSTAGLSA…DSSDDWEIPD (64 aa). Over residues 33-57 the composition is skewed to basic and acidic residues; sequence QRERKSSSSSEDRNRMKTLGRRDSS. A Protein kinase domain is found at 67 to 327; that stretch reads ITVGQRIGSG…PQILASIELL (261 aa). Residues 73–81 and lysine 93 contribute to the ATP site; that span reads IGSGSFGTV. Residue aspartate 186 is the Proton acceptor of the active site.

It belongs to the protein kinase superfamily. TKL Ser/Thr protein kinase family. RAF subfamily.

The enzyme catalyses L-seryl-[protein] + ATP = O-phospho-L-seryl-[protein] + ADP + H(+). It catalyses the reaction L-threonyl-[protein] + ATP = O-phospho-L-threonyl-[protein] + ADP + H(+). The polypeptide is Serine/threonine-protein kinase-transforming protein Rmil (V-RMIL) (Avian retrovirus IC10).